The sequence spans 545 residues: Glutamine-dependent NAD(+) synthetase (545 aa).

Positions 5-247 (LRIAMAQFDF…DQWLVVDYMR (243 aa)) constitute a CN hydrolase domain. Glu-46 functions as the Proton acceptor; for glutaminase activity in the catalytic mechanism. The For glutaminase activity role is filled by Lys-113. Tyr-119 provides a ligand contact to L-glutamine. The active-site Nucleophile; for glutaminase activity is the Cys-151. L-glutamine-binding residues include Ser-177 and Lys-183. Positions 269 to 545 (VWRAVVRGVQ…RYPISNAYRG (277 aa)) are ligase. Residue 292 to 299 (GLSGGIDS) participates in ATP binding. Deamido-NAD(+) is bound at residue Asn-375. Thr-399 serves as a coordination point for ATP. Deamido-NAD(+) contacts are provided by Glu-404 and Lys-516.

It in the C-terminal section; belongs to the NAD synthetase family.

It carries out the reaction deamido-NAD(+) + L-glutamine + ATP + H2O = L-glutamate + AMP + diphosphate + NAD(+) + H(+). It participates in cofactor biosynthesis; NAD(+) biosynthesis; NAD(+) from deamido-NAD(+) (L-Gln route): step 1/1. Functionally, catalyzes the ATP-dependent amidation of deamido-NAD to form NAD. Uses L-glutamine as a nitrogen source. This chain is Glutamine-dependent NAD(+) synthetase, found in Xylella fastidiosa (strain Temecula1 / ATCC 700964).